The following is a 346-amino-acid chain: Ephrin-B1 (346 aa).

An N-terminal signal peptide occupies residues 1–27 (MARPGQRWLGKWLVAMVVWALCRLATP). Over 28-237 (LAKNLEPVSW…GDPDGFFNSK (210 aa)) the chain is Extracellular. Positions 30–164 (KNLEPVSWSS…TRTMKIIMKV (135 aa)) constitute an Ephrin RBD domain. 2 disulfide bridges follow: cysteine 64–cysteine 101 and cysteine 89–cysteine 153. N-linked (GlcNAc...) asparagine glycosylation is present at asparagine 139. A disordered region spans residues 169-228 (NAVTPEQLTTSRPSKEADNTVKMATQAPGSRGSLGDSDGKHETVNQEEKSGPGASGGSSG). The segment covering 205-218 (SDGKHETVNQEEKS) has biased composition (basic and acidic residues). A helical transmembrane segment spans residues 238–258 (VALFAAVGAGCVIFLLIIIFL). The Cytoplasmic segment spans residues 259–346 (TVLLLKLRKR…QSPANIYYKV (88 aa)). Positions 260–273 (VLLLKLRKRHRKHT) match the Nuclear localization signal motif. Positions 263–294 (LKLRKRHRKHTQQRAAALSLSTLASPKGGSGT) are interaction with ZHX2. Serine 281 and serine 287 each carry phosphoserine. The PDZ-binding signature appears at 344–346 (YKV).

The protein belongs to the ephrin family. Interacts (via PDZ-binding motif) with GRIP1 and GRIP2 (via PDZ domain 6). Interacts with TLE1. The intracellular domain peptide interacts with ZHX2; the interaction enhances ZHX2 transcriptional repression activity. In terms of processing, inducible phosphorylation of tyrosine residues in the cytoplasmic domain. Post-translationally, proteolytically processed. The ectodomain is cleaved, probably by a metalloprotease, to produce a membrane-tethered C-terminal fragment. This fragment is then further processed by the gamma-secretase complex to yield a soluble intracellular domain peptide which can translocate to the nucleus. The intracellular domain peptide is highly labile suggesting that it is targeted for degradation by the proteasome. Widely expressed. Detected in both neuronal and non-neuronal tissues. Seems to have particularly strong expression in retina, sciatic nerve, heart and spinal cord.

It localises to the cell membrane. It is found in the membrane raft. The protein resides in the nucleus. Cell surface transmembrane ligand for Eph receptors, a family of receptor tyrosine kinases which are crucial for migration, repulsion and adhesion during neuronal, vascular and epithelial development. Binding to Eph receptors residing on adjacent cells leads to contact-dependent bidirectional signaling into neighboring cells. Shows high affinity for the receptor tyrosine kinase EPHB1/ELK. Can also bind EPHB2 and EPHB3. Binds to, and induces collapse of, commissural axons/growth cones in vitro. May play a role in constraining the orientation of longitudinally projecting axons. This chain is Ephrin-B1 (EFNB1), found in Homo sapiens (Human).